The sequence spans 98 residues: C-X-C motif chemokine 10 (98 aa).

The N-terminal stretch at 1 to 21 (MNQTAILICCLVFLTLSGIQG) is a signal peptide. Arg-26 is subject to Citrulline. Intrachain disulfides connect Cys-30/Cys-57 and Cys-32/Cys-74.

This sequence belongs to the intercrine alpha (chemokine CxC) family.

Its subcellular location is the secreted. Chemotactic for monocytes and T-lymphocytes. Binds to CXCR3. This Macaca mulatta (Rhesus macaque) protein is C-X-C motif chemokine 10 (CXCL10).